A 365-amino-acid chain; its full sequence is uncharacterized protein (365 aa).

ATP is bound at residue 31-38 (GPINSGKT).

The protein belongs to the archaeal ATPase family.

This is an uncharacterized protein from Methanocaldococcus jannaschii (strain ATCC 43067 / DSM 2661 / JAL-1 / JCM 10045 / NBRC 100440) (Methanococcus jannaschii).